Reading from the N-terminus, the 520-residue chain is Laccase (520 aa).

The signal sequence occupies residues 1–21 (MSRFQSLLAFVVASLAAVAHA). Plastocyanin-like domains are found at residues 23–148 (IGPT…FVVY) and 160–302 (VDND…ILRY). N-linked (GlcNAc...) asparagine glycosylation is found at Asn72 and Asn75. Cu cation-binding residues include His85, His87, His130, and His132. Cystine bridges form between Cys106/Cys509 and Cys138/Cys226. Asn210, Asn229, and Asn354 each carry an N-linked (GlcNAc...) asparagine glycan. Residues 369-491 (TVPVLLQIIS…AGFAVVFAED (123 aa)) form the Plastocyanin-like 3 domain. Positions 416, 419, 421, 473, 474, 475, and 479 each coordinate Cu cation.

The protein belongs to the multicopper oxidase family. Cu cation is required as a cofactor.

The protein resides in the secreted. The catalysed reaction is 4 hydroquinone + O2 = 4 benzosemiquinone + 2 H2O. In terms of biological role, lignin degradation and detoxification of lignin-derived products. Has activity towards guaiacol. The polypeptide is Laccase (Trametes hirsuta (White-rot fungus)).